The following is a 227-amino-acid chain: Cytochrome c oxidase subunit 2 (227 aa).

The Mitochondrial intermembrane portion of the chain corresponds to 1 to 14 (MAYPFELGFQDATS). The helical transmembrane segment at 15-45 (PIMEELLHFHDHTLMIVFLISSLVLYIISLM) threads the bilayer. The Mitochondrial matrix segment spans residues 46-59 (LTTKLTHTSTMDAQ). Residues 60–87 (EVETIWTILPAIILILIALPSLRILYMM) form a helical membrane-spanning segment. Over 88 to 227 (DEINDPSLTV…HFENWSSSML (140 aa)) the chain is Mitochondrial intermembrane. Cu cation-binding residues include histidine 161, cysteine 196, glutamate 198, cysteine 200, histidine 204, and methionine 207. A Mg(2+)-binding site is contributed by glutamate 198.

Belongs to the cytochrome c oxidase subunit 2 family. As to quaternary structure, component of the cytochrome c oxidase (complex IV, CIV), a multisubunit enzyme composed of 14 subunits. The complex is composed of a catalytic core of 3 subunits MT-CO1, MT-CO2 and MT-CO3, encoded in the mitochondrial DNA, and 11 supernumerary subunits COX4I, COX5A, COX5B, COX6A, COX6B, COX6C, COX7A, COX7B, COX7C, COX8 and NDUFA4, which are encoded in the nuclear genome. The complex exists as a monomer or a dimer and forms supercomplexes (SCs) in the inner mitochondrial membrane with NADH-ubiquinone oxidoreductase (complex I, CI) and ubiquinol-cytochrome c oxidoreductase (cytochrome b-c1 complex, complex III, CIII), resulting in different assemblies (supercomplex SCI(1)III(2)IV(1) and megacomplex MCI(2)III(2)IV(2)). Found in a complex with TMEM177, COA6, COX18, COX20, SCO1 and SCO2. Interacts with TMEM177 in a COX20-dependent manner. Interacts with COX20. Interacts with COX16. Cu cation is required as a cofactor.

The protein localises to the mitochondrion inner membrane. It carries out the reaction 4 Fe(II)-[cytochrome c] + O2 + 8 H(+)(in) = 4 Fe(III)-[cytochrome c] + 2 H2O + 4 H(+)(out). In terms of biological role, component of the cytochrome c oxidase, the last enzyme in the mitochondrial electron transport chain which drives oxidative phosphorylation. The respiratory chain contains 3 multisubunit complexes succinate dehydrogenase (complex II, CII), ubiquinol-cytochrome c oxidoreductase (cytochrome b-c1 complex, complex III, CIII) and cytochrome c oxidase (complex IV, CIV), that cooperate to transfer electrons derived from NADH and succinate to molecular oxygen, creating an electrochemical gradient over the inner membrane that drives transmembrane transport and the ATP synthase. Cytochrome c oxidase is the component of the respiratory chain that catalyzes the reduction of oxygen to water. Electrons originating from reduced cytochrome c in the intermembrane space (IMS) are transferred via the dinuclear copper A center (CU(A)) of subunit 2 and heme A of subunit 1 to the active site in subunit 1, a binuclear center (BNC) formed by heme A3 and copper B (CU(B)). The BNC reduces molecular oxygen to 2 water molecules using 4 electrons from cytochrome c in the IMS and 4 protons from the mitochondrial matrix. This Neotamias bulleri (Buller's chipmunk) protein is Cytochrome c oxidase subunit 2 (MT-CO2).